Reading from the N-terminus, the 556-residue chain is Formate--tetrahydrofolate ligase (556 aa).

65–72 lines the ATP pocket; sequence TPAGEGKS.

It belongs to the formate--tetrahydrofolate ligase family.

The catalysed reaction is (6S)-5,6,7,8-tetrahydrofolate + formate + ATP = (6R)-10-formyltetrahydrofolate + ADP + phosphate. It participates in one-carbon metabolism; tetrahydrofolate interconversion. The sequence is that of Formate--tetrahydrofolate ligase from Natranaerobius thermophilus (strain ATCC BAA-1301 / DSM 18059 / JW/NM-WN-LF).